A 398-amino-acid polypeptide reads, in one-letter code: Phosphoglycerate kinase (398 aa).

Substrate-binding positions include 23-25, Arg38, 61-64, Arg120, and Arg153; these read DLN and HFGR. Residues Lys203, Glu325, and 355–358 contribute to the ATP site; that span reads GGDT.

The protein belongs to the phosphoglycerate kinase family. As to quaternary structure, monomer.

It is found in the cytoplasm. The enzyme catalyses (2R)-3-phosphoglycerate + ATP = (2R)-3-phospho-glyceroyl phosphate + ADP. It functions in the pathway carbohydrate degradation; glycolysis; pyruvate from D-glyceraldehyde 3-phosphate: step 2/5. The polypeptide is Phosphoglycerate kinase (Chelativorans sp. (strain BNC1)).